A 344-amino-acid chain; its full sequence is Follistatin (344 aa).

The signal sequence occupies residues 1-29 (MVRARHQPGGLCLLLLLLCQFMEDRSAQA). Positions 30–103 (GNCWLRQAKN…TCENVDCGPG (74 aa)) constitute a TB domain. Disulfide bonds link Cys32-Cys55, Cys42-Cys88, Cys56-Cys91, Cys95-Cys106, Cys100-Cys116, Cys118-Cys150, Cys122-Cys143, Cys132-Cys164, Cys168-Cys179, Cys173-Cys189, Cys192-Cys225, Cys196-Cys218, Cys207-Cys239, Cys245-Cys256, Cys250-Cys267, Cys270-Cys302, Cys274-Cys295, and Cys284-Cys316. Residues 94–117 (TCENVDCGPGKKCRMNKKNKPRCV) form the Follistatin-like 1 domain. The Kazal-like 1 domain occupies 112–166 (NKPRCVCAPDCSNITWKGPVCGLDGKTYRNECALLKARCKEQPELEVQYQGRCKK). A glycan (N-linked (GlcNAc...) asparagine) is linked at Asn124. The 24-residue stretch at 167-190 (TCRDVFCPGSSTCVVDQTNNAYCV) folds into the Follistatin-like 2 domain. A Kazal-like 2 domain is found at 186–241 (NAYCVTCNRICPEPASSEQYLCGNDGVTYSSACHLRKATCLLGRSIGLAYEGKCIK). A Follistatin-like 3 domain is found at 244–268 (SCEDIQCTGGKKCLWDFKVGRGRCS). One can recognise a Kazal-like 3 domain in the interval 264-318 (RGRCSLCDELCPDSKSDEPVCASDNATYASECAMKEAACSSGVLLEVKHSGSCNS). Asn288 carries N-linked (GlcNAc...) asparagine glycosylation. The segment at 314–344 (GSCNSISEDTEEEEEDEDQDYSFPISSILEW) is disordered. Positions 321-333 (EDTEEEEEDEDQD) are enriched in acidic residues.

In terms of assembly, interacts with GDF11. Interacts with activin A/INHBA. Interacts with MYOSTATIN/MSTN. In terms of tissue distribution, isoform 1 is the predominant isoform in serum but is undetectable in follicular fluid. In the embryo, strong expression is seen in the palatal epithelia, including the medial edge epithelial and midline epithelial seam of the palatal shelves. Less pronounced expression is also seen throughout the palatal shelf and tongue mesenchyme.

The protein resides in the secreted. It localises to the nucleus. It is found in the nucleolus. In terms of biological role, multifunctional regulatory protein whose primary function is to antagonize members of the transforming growth factor beta (TGF-beta) superfamily including activin, myostatin, GDF11 or bone morphogenetic proteins (BMPs). Mechanistically, binds to these ligands in the extracellular space, blocking their type II receptor-binding site to inhibit downstream signaling. Plays an essential role in muscle fiber formation and growth both by preventing the repressive effects of myostatin and through SMAD3/AKT/mTOR signaling independently of myostatin. Also promotes neural differentiation by antagonizing the action BMP4. Acts as a specific inhibitor of the biosynthesis and secretion of pituitary follicle stimulating hormone (FSH) by sequestering activin A/INHBA. On the other hand, translocates into the nucleus where it down-regulates rRNA synthesis and ribosome biogenesis to maintain cellular energy homeostasis by binding to rDNA. The protein is Follistatin of Homo sapiens (Human).